A 401-amino-acid polypeptide reads, in one-letter code: Decapping and exoribonuclease protein (401 aa).

The tract at residues 1–27 (MEGNKSMQREKIDRPMKRGPEQNSLSP) is disordered. The segment covering 7–20 (MQREKIDRPMKRGP) has biased composition (basic and acidic residues). Residues Arg-69, Glu-114, and 149–151 (WRG) each bind substrate. Glu-210 is a Mg(2+) binding site. The substrate site is built by Cys-235 and Glu-252. Mg(2+) is bound by residues Glu-252, Asp-254, Glu-271, and Leu-272. Substrate is bound by residues Lys-273 and Gln-298.

Belongs to the DXO/Dom3Z family. Mg(2+) serves as cofactor.

It is found in the nucleus. It carries out the reaction a 5'-end triphospho-ribonucleoside in mRNA + H2O = a 5'-end phospho-ribonucleoside in mRNA + diphosphate + H(+). It catalyses the reaction a 5'-end NAD(+)-phospho-ribonucleoside in mRNA + H2O = a 5'-end phospho-ribonucleoside in mRNA + NAD(+) + H(+). The enzyme catalyses a 5'-end NAD(+)-phospho-ribonucleoside in snoRNA + H2O = a 5'-end phospho-ribonucleoside in snoRNA + NAD(+) + H(+). The catalysed reaction is a 5'-end (N(7)-methyl 5'-triphosphoguanosine)-ribonucleoside-ribonucleotide in mRNA + H2O = a (N(7)-methyl 5'-triphosphoguanosine)-nucleoside + a 5'-end phospho-ribonucleoside in mRNA + H(+). It carries out the reaction a 5'-end FAD-phospho-ribonucleoside in mRNA + H2O = a 5'-end phospho-ribonucleoside in mRNA + FAD + H(+). It catalyses the reaction a 5'-end CoA-ribonucleoside in mRNA + H2O = 3'-dephospho-CoA + a 5'-end phospho-ribonucleoside in mRNA + H(+). Its function is as follows. Decapping enzyme for NAD-capped RNAs: specifically hydrolyzes the nicotinamide adenine dinucleotide (NAD) cap from a subset of RNAs by removing the entire NAD moiety from the 5'-end of an NAD-capped RNA. The NAD-cap is present at the 5'-end of some RNAs and snoRNAs. In contrast to the canonical 5'-end N7 methylguanosine (m7G) cap, the NAD cap promotes mRNA decay. Also acts as a non-canonical decapping enzyme that removes the entire cap structure of m7G capped or incompletely capped RNAs and mediates their subsequent degradation. Specifically degrades pre-mRNAs with a defective 5'-end m7G cap and is part of a pre-mRNA capping quality control. Has decapping activity toward incomplete 5'-end m7G cap mRNAs such as unmethylated 5'-end-capped RNA (cap0), while it has no activity toward 2'-O-ribose methylated m7G cap (cap1). Also has 5'-3' exoribonuclease activities: The 5'-end monophosphate RNA is then degraded by the 5'-3' exoribonuclease activity, enabling this enzyme to decap and degrade incompletely capped mRNAs. Also possesses RNA 5'-pyrophosphohydrolase activity by hydrolyzing the 5'-end triphosphate to release pyrophosphates. Exhibits decapping activity towards FAD-capped RNAs. Exhibits decapping activity towards dpCoA-capped RNAs in vitro. This is Decapping and exoribonuclease protein from Xenopus laevis (African clawed frog).